Reading from the N-terminus, the 264-residue chain is Thiazole synthase (264 aa).

Residue K106 is the Schiff-base intermediate with DXP of the active site. 1-deoxy-D-xylulose 5-phosphate is bound by residues G167, 193 to 194, and 215 to 216; these read AG and NT.

This sequence belongs to the ThiG family. In terms of assembly, homotetramer. Forms heterodimers with either ThiH or ThiS.

It is found in the cytoplasm. It carries out the reaction [ThiS sulfur-carrier protein]-C-terminal-Gly-aminoethanethioate + 2-iminoacetate + 1-deoxy-D-xylulose 5-phosphate = [ThiS sulfur-carrier protein]-C-terminal Gly-Gly + 2-[(2R,5Z)-2-carboxy-4-methylthiazol-5(2H)-ylidene]ethyl phosphate + 2 H2O + H(+). The protein operates within cofactor biosynthesis; thiamine diphosphate biosynthesis. Its function is as follows. Catalyzes the rearrangement of 1-deoxy-D-xylulose 5-phosphate (DXP) to produce the thiazole phosphate moiety of thiamine. Sulfur is provided by the thiocarboxylate moiety of the carrier protein ThiS. In vitro, sulfur can be provided by H(2)S. This is Thiazole synthase from Xanthomonas euvesicatoria pv. vesicatoria (strain 85-10) (Xanthomonas campestris pv. vesicatoria).